The sequence spans 128 residues: Large ribosomal subunit protein bL17 (128 aa).

This sequence belongs to the bacterial ribosomal protein bL17 family. In terms of assembly, part of the 50S ribosomal subunit. Contacts protein L32.

The protein is Large ribosomal subunit protein bL17 of Haemophilus influenzae (strain 86-028NP).